A 318-amino-acid polypeptide reads, in one-letter code: MPMINLLLLILPTLIAMAFLMLTERKILGYTQLRKGPNIVGPYGLLQPFADAMKLFTKEPLKPSTSTTALYIIAPTLALTIALLLWTPLPMPNPLINLNLGLLFILATSSLTVYSILWSGWASNSNYALIGALRAVAQTISYEVTSAIILLSVLLMSGSFNLSTLITTQEHIWLLLPTWPLAMMWFISTLAETNRTPFDLTEGESELVSGFNTEYAAGPFALFFMAEYVNIIMMNALTTMIFLGTTHNAHRPELYTTCFTIKTLLLTSLFLWIRTTYPRFRYDQLMYLLWKNFLPLTLTLLMWYISLSTMIASIPPQT.

8 helical membrane passes run 2 to 22 (PMIN…FLML), 69 to 89 (ALYI…WTPL), 100 to 120 (LGLL…LWSG), 147 to 167 (AIIL…TLIT), 171 to 191 (HIWL…STLA), 222 to 242 (LFFM…TMIF), 253 to 273 (ELYT…FLWI), and 294 to 314 (LPLT…IASI).

This sequence belongs to the complex I subunit 1 family. Core subunit of respiratory chain NADH dehydrogenase (Complex I) which is composed of 45 different subunits.

The protein localises to the mitochondrion inner membrane. It carries out the reaction a ubiquinone + NADH + 5 H(+)(in) = a ubiquinol + NAD(+) + 4 H(+)(out). Core subunit of the mitochondrial membrane respiratory chain NADH dehydrogenase (Complex I) which catalyzes electron transfer from NADH through the respiratory chain, using ubiquinone as an electron acceptor. Essential for the catalytic activity and assembly of complex I. This Hylobates lar (Lar gibbon) protein is NADH-ubiquinone oxidoreductase chain 1 (MT-ND1).